A 357-amino-acid polypeptide reads, in one-letter code: MTKENICIVFGGKSAEHDVSILTAQNVLNAIDKERYQVDIIYITNDGEWKKKDNITQEIKNTDELVINDVETGEISQLLSKGSLGKSYDAVFPLLHGPNGEDGTIQGLFEVLDIPYVGNGVLAASSSMDKLVMKQLFEHRGLPQLPYISFLRSEYEKYENNIIKLVNDKLTYPVFVKPANLGSSVGISKCNNEEELKSGIAEAFQFDRKLVIEQGINAREIEVAVLGNDYPETTWPGEVVKDVAFYDYKSKYKDGKIRLDIPADLDQDVQMTLRNMALEAFKATDCSGLVRADFFVTDDNQIYINETNAMPGFTAYSMYPNLWKNMGLSYPDLIAKLIDLAKERYEDKKKNKYKIDY.

Residues 134-339 (KQLFEHRGLP…YPDLIAKLID (206 aa)) form the ATP-grasp domain. 167–222 (NDKLTYPVFVKPANLGSSVGISKCNNEEELKSGIAEAFQFDRKLVIEQGINAREIE) lines the ATP pocket. Residues Asp-293, Glu-306, and Asn-308 each contribute to the Mg(2+) site.

It belongs to the D-alanine--D-alanine ligase family. Mg(2+) serves as cofactor. It depends on Mn(2+) as a cofactor.

The protein resides in the cytoplasm. It carries out the reaction 2 D-alanine + ATP = D-alanyl-D-alanine + ADP + phosphate + H(+). Its pathway is cell wall biogenesis; peptidoglycan biosynthesis. Its function is as follows. Cell wall formation. This is D-alanine--D-alanine ligase from Staphylococcus epidermidis (strain ATCC 35984 / DSM 28319 / BCRC 17069 / CCUG 31568 / BM 3577 / RP62A).